The primary structure comprises 285 residues: Putative alkaline ceramidase dcd3B (285 aa).

3 helical membrane passes run 34–54 (TFSS…MMSA), 77–97 (VLFS…YHAT), and 104–124 (LFDE…ILTI). Asn131 is a glycosylation site (N-linked (GlcNAc...) asparagine). A run of 4 helical transmembrane segments spans residues 141 to 161 (RFLP…ITII), 166 to 186 (IILQ…SYMY), 200 to 220 (PKKF…SWLT), and 236 to 256 (LHAV…QFFI).

Belongs to the alkaline ceramidase family.

It is found in the membrane. The sequence is that of Putative alkaline ceramidase dcd3B (dcd3B) from Dictyostelium discoideum (Social amoeba).